The sequence spans 277 residues: 2,3,4,5-tetrahydropyridine-2,6-dicarboxylate N-succinyltransferase (277 aa).

Arg-106 and Asp-143 together coordinate substrate.

This sequence belongs to the transferase hexapeptide repeat family. In terms of assembly, homotrimer.

It localises to the cytoplasm. It carries out the reaction (S)-2,3,4,5-tetrahydrodipicolinate + succinyl-CoA + H2O = (S)-2-succinylamino-6-oxoheptanedioate + CoA. It functions in the pathway amino-acid biosynthesis; L-lysine biosynthesis via DAP pathway; LL-2,6-diaminopimelate from (S)-tetrahydrodipicolinate (succinylase route): step 1/3. This Xylella fastidiosa (strain Temecula1 / ATCC 700964) protein is 2,3,4,5-tetrahydropyridine-2,6-dicarboxylate N-succinyltransferase.